A 279-amino-acid polypeptide reads, in one-letter code: 4-hydroxy-3-methylbut-2-enyl diphosphate reductase (279 aa).

Position 12 (Cys12) interacts with [4Fe-4S] cluster. (2E)-4-hydroxy-3-methylbut-2-enyl diphosphate contacts are provided by His40 and His72. Residues His40 and His72 each contribute to the dimethylallyl diphosphate site. Isopentenyl diphosphate-binding residues include His40 and His72. Cys94 contributes to the [4Fe-4S] cluster binding site. His122 is a binding site for (2E)-4-hydroxy-3-methylbut-2-enyl diphosphate. Residue His122 coordinates dimethylallyl diphosphate. His122 lines the isopentenyl diphosphate pocket. Glu124 serves as the catalytic Proton donor. Thr161 contacts (2E)-4-hydroxy-3-methylbut-2-enyl diphosphate. Cys189 is a [4Fe-4S] cluster binding site. Residues Ser217, Asn219, and Ser261 each coordinate (2E)-4-hydroxy-3-methylbut-2-enyl diphosphate. Dimethylallyl diphosphate is bound by residues Ser217, Asn219, and Ser261. Positions 217, 219, and 261 each coordinate isopentenyl diphosphate.

It belongs to the IspH family. [4Fe-4S] cluster is required as a cofactor.

The enzyme catalyses isopentenyl diphosphate + 2 oxidized [2Fe-2S]-[ferredoxin] + H2O = (2E)-4-hydroxy-3-methylbut-2-enyl diphosphate + 2 reduced [2Fe-2S]-[ferredoxin] + 2 H(+). The catalysed reaction is dimethylallyl diphosphate + 2 oxidized [2Fe-2S]-[ferredoxin] + H2O = (2E)-4-hydroxy-3-methylbut-2-enyl diphosphate + 2 reduced [2Fe-2S]-[ferredoxin] + 2 H(+). The protein operates within isoprenoid biosynthesis; dimethylallyl diphosphate biosynthesis; dimethylallyl diphosphate from (2E)-4-hydroxy-3-methylbutenyl diphosphate: step 1/1. Its pathway is isoprenoid biosynthesis; isopentenyl diphosphate biosynthesis via DXP pathway; isopentenyl diphosphate from 1-deoxy-D-xylulose 5-phosphate: step 6/6. In terms of biological role, catalyzes the conversion of 1-hydroxy-2-methyl-2-(E)-butenyl 4-diphosphate (HMBPP) into a mixture of isopentenyl diphosphate (IPP) and dimethylallyl diphosphate (DMAPP). Acts in the terminal step of the DOXP/MEP pathway for isoprenoid precursor biosynthesis. This Syntrophotalea carbinolica (strain DSM 2380 / NBRC 103641 / GraBd1) (Pelobacter carbinolicus) protein is 4-hydroxy-3-methylbut-2-enyl diphosphate reductase.